The following is a 201-amino-acid chain: Holliday junction branch migration complex subunit RuvA (201 aa).

The tract at residues 1 to 64 (MFAFLRGELV…EDAQQLFGFL (64 aa)) is domain I. The domain II stretch occupies residues 65–143 (DEEELQLFRL…KIQPAASGKT (79 aa)). The interval 144 to 154 (AGAPQALQLNE) is flexible linker. The domain III stretch occupies residues 154–201 (EDALAALMTLGFPKPAAQKAISGILETSPGLSVEEVVRAALIAIHNNF).

Belongs to the RuvA family. In terms of assembly, homotetramer. Forms an RuvA(8)-RuvB(12)-Holliday junction (HJ) complex. HJ DNA is sandwiched between 2 RuvA tetramers; dsDNA enters through RuvA and exits via RuvB. An RuvB hexamer assembles on each DNA strand where it exits the tetramer. Each RuvB hexamer is contacted by two RuvA subunits (via domain III) on 2 adjacent RuvB subunits; this complex drives branch migration. In the full resolvosome a probable DNA-RuvA(4)-RuvB(12)-RuvC(2) complex forms which resolves the HJ.

Its subcellular location is the cytoplasm. Functionally, the RuvA-RuvB-RuvC complex processes Holliday junction (HJ) DNA during genetic recombination and DNA repair, while the RuvA-RuvB complex plays an important role in the rescue of blocked DNA replication forks via replication fork reversal (RFR). RuvA specifically binds to HJ cruciform DNA, conferring on it an open structure. The RuvB hexamer acts as an ATP-dependent pump, pulling dsDNA into and through the RuvAB complex. HJ branch migration allows RuvC to scan DNA until it finds its consensus sequence, where it cleaves and resolves the cruciform DNA. In Chlorobaculum tepidum (strain ATCC 49652 / DSM 12025 / NBRC 103806 / TLS) (Chlorobium tepidum), this protein is Holliday junction branch migration complex subunit RuvA.